We begin with the raw amino-acid sequence, 235 residues long: Acyl-protein thioesterase 1 (235 aa).

Active-site charge relay system residues include Ser119, Asp172, and His206.

It belongs to the AB hydrolase superfamily. AB hydrolase 2 family.

The protein localises to the cytoplasm. It is found in the nucleus. It catalyses the reaction S-hexadecanoyl-L-cysteinyl-[protein] + H2O = L-cysteinyl-[protein] + hexadecanoate + H(+). Its function is as follows. Hydrolyzes fatty acids from S-acylated cysteine residues in proteins with a strong preference for palmitoylated G-alpha proteins over other acyl substrates. Mediates the deacylation of G-alpha proteins such as GPA1 in vivo, but has weak or no activity toward palmitoylated Ras proteins. Has weak lysophospholipase activity in vitro; however such activity may not exist in vivo. The sequence is that of Acyl-protein thioesterase 1 from Eremothecium gossypii (strain ATCC 10895 / CBS 109.51 / FGSC 9923 / NRRL Y-1056) (Yeast).